A 140-amino-acid chain; its full sequence is Large ribosomal subunit protein uL22 (140 aa).

The protein belongs to the universal ribosomal protein uL22 family. As to quaternary structure, part of the 50S ribosomal subunit.

Its function is as follows. This protein binds specifically to 23S rRNA; its binding is stimulated by other ribosomal proteins, e.g. L4, L17, and L20. It is important during the early stages of 50S assembly. It makes multiple contacts with different domains of the 23S rRNA in the assembled 50S subunit and ribosome. Functionally, the globular domain of the protein is located near the polypeptide exit tunnel on the outside of the subunit, while an extended beta-hairpin is found that lines the wall of the exit tunnel in the center of the 70S ribosome. The polypeptide is Large ribosomal subunit protein uL22 (Parafrankia sp. (strain EAN1pec)).